A 426-amino-acid chain; its full sequence is 3-phosphoshikimate 1-carboxyvinyltransferase (426 aa).

Positions 21, 22, and 26 each coordinate 3-phosphoshikimate. Lys21 is a binding site for phosphoenolpyruvate. Gly92 and Arg122 together coordinate phosphoenolpyruvate. 3-phosphoshikimate-binding residues include Ser167, Ser168, Gln169, Ser195, Asp315, and Lys342. Gln169 serves as a coordination point for phosphoenolpyruvate. The active-site Proton acceptor is the Asp315. Positions 346 and 386 each coordinate phosphoenolpyruvate.

This sequence belongs to the EPSP synthase family. Monomer.

Its subcellular location is the cytoplasm. It catalyses the reaction 3-phosphoshikimate + phosphoenolpyruvate = 5-O-(1-carboxyvinyl)-3-phosphoshikimate + phosphate. The protein operates within metabolic intermediate biosynthesis; chorismate biosynthesis. Catalyzes the transfer of the enolpyruvyl moiety of phosphoenolpyruvate (PEP) to the 5-hydroxyl of shikimate-3-phosphate (S3P) to produce enolpyruvyl shikimate-3-phosphate and inorganic phosphate. The chain is 3-phosphoshikimate 1-carboxyvinyltransferase from Methanosphaera stadtmanae (strain ATCC 43021 / DSM 3091 / JCM 11832 / MCB-3).